A 330-amino-acid polypeptide reads, in one-letter code: tRNA-modifying protein YgfZ (330 aa).

The folate site is built by tryptophan 28 and tryptophan 190.

The protein belongs to the tRNA-modifying YgfZ family.

It is found in the cytoplasm. Folate-binding protein involved in regulating the level of ATP-DnaA and in the modification of some tRNAs. It is probably a key factor in regulatory networks that act via tRNA modification, such as initiation of chromosomal replication. This Yersinia enterocolitica serotype O:8 / biotype 1B (strain NCTC 13174 / 8081) protein is tRNA-modifying protein YgfZ.